A 1137-amino-acid polypeptide reads, in one-letter code: Receptor-type guanylate cyclase gcy-1 (1137 aa).

The signal sequence occupies residues 1-18 (MQIFTILLLFNIFPSIFV). Residues 19–494 (QNLPDTTVAP…CPVSFWEQYK (476 aa)) lie on the Extracellular side of the membrane. 6 N-linked (GlcNAc...) asparagine glycosylation sites follow: Asn219, Asn348, Asn358, Asn384, Asn417, and Asn451. A helical membrane pass occupies residues 495 to 515 (ILIFVAIAVIVLMVLIMIIGC). The Cytoplasmic segment spans residues 516–1137 (LCVISGKRAE…FKMDTLKVAN (622 aa)). The region spanning 557-826 (LQSAPSISTG…ENICSQMKGL (270 aa)) is the Protein kinase domain. The stretch at 840-871 (NMLEEYTSTLEEEIEERTKELTLEKKKADILL) forms a coiled coil. In terms of domain architecture, Guanylate cyclase spans 898 to 1028 (TVFFSDVVKF…DTVNTASRME (131 aa)). Residues 1086–1122 (ELRSISNRSTPPVTNDRWIPNPSSSHGSRPSSVYDPL) form a disordered region. A compositionally biased stretch (polar residues) spans 1088–1098 (RSISNRSTPPV). Positions 1105–1117 (PNPSSSHGSRPSS) are enriched in low complexity.

It belongs to the adenylyl cyclase class-4/guanylyl cyclase family. Expressed predominantly in sensory neurons. Expressed asymmetrically in the right ASE (ASER) neuron and bilaterally in ASI and URX neurons. Expressed in PVT and bilaterally in AIY non-sensory neurons. Expressed in intestine.

The protein localises to the membrane. It carries out the reaction GTP = 3',5'-cyclic GMP + diphosphate. In terms of biological role, guanylate cyclase involved in the production of the second messenger cGMP. Involved in the sensing of K+ gradient by the ASE right (ASER) sensory neuron. This Caenorhabditis elegans protein is Receptor-type guanylate cyclase gcy-1 (gcy-1).